The following is a 98-amino-acid chain: NADH-ubiquinone oxidoreductase chain 4L (98 aa).

3 helical membrane-spanning segments follow: residues 1 to 21, 26 to 46, and 61 to 81; these read MNLI…GLIF, IINI…LFVL, and LYIL…VVIL.

This sequence belongs to the complex I subunit 4L family.

It localises to the mitochondrion membrane. The enzyme catalyses a ubiquinone + NADH + 5 H(+)(in) = a ubiquinol + NAD(+) + 4 H(+)(out). Its function is as follows. Core subunit of the mitochondrial membrane respiratory chain NADH dehydrogenase (Complex I) that is believed to belong to the minimal assembly required for catalysis. Complex I functions in the transfer of electrons from NADH to the respiratory chain. The immediate electron acceptor for the enzyme is believed to be ubiquinone. The chain is NADH-ubiquinone oxidoreductase chain 4L (nad4L) from Dictyostelium discoideum (Social amoeba).